Reading from the N-terminus, the 410-residue chain is Multifunctional CCA protein (410 aa).

The ATP site is built by glycine 8 and arginine 11. Glycine 8 and arginine 11 together coordinate CTP. 2 residues coordinate Mg(2+): aspartate 21 and aspartate 23. Positions 91, 138, and 141 each coordinate ATP. Arginine 91, arginine 138, and arginine 141 together coordinate CTP. An HD domain is found at 229–347; sequence TGVHQEMVSD…AQLALVCEAD (119 aa).

It belongs to the tRNA nucleotidyltransferase/poly(A) polymerase family. Bacterial CCA-adding enzyme type 1 subfamily. Monomer. Can also form homodimers and oligomers. Requires Mg(2+) as cofactor. It depends on Ni(2+) as a cofactor.

It catalyses the reaction a tRNA precursor + 2 CTP + ATP = a tRNA with a 3' CCA end + 3 diphosphate. It carries out the reaction a tRNA with a 3' CCA end + 2 CTP + ATP = a tRNA with a 3' CCACCA end + 3 diphosphate. Catalyzes the addition and repair of the essential 3'-terminal CCA sequence in tRNAs without using a nucleic acid template. Adds these three nucleotides in the order of C, C, and A to the tRNA nucleotide-73, using CTP and ATP as substrates and producing inorganic pyrophosphate. tRNA 3'-terminal CCA addition is required both for tRNA processing and repair. Also involved in tRNA surveillance by mediating tandem CCA addition to generate a CCACCA at the 3' terminus of unstable tRNAs. While stable tRNAs receive only 3'-terminal CCA, unstable tRNAs are marked with CCACCA and rapidly degraded. This Xanthomonas campestris pv. campestris (strain B100) protein is Multifunctional CCA protein.